The chain runs to 419 residues: Serine hydroxymethyltransferase (419 aa).

Residues Leu121 and 125–127 (GHL) each bind (6S)-5,6,7,8-tetrahydrofolate. At Lys231 the chain carries N6-(pyridoxal phosphate)lysine.

It belongs to the SHMT family. Homodimer. Pyridoxal 5'-phosphate serves as cofactor.

It is found in the cytoplasm. It catalyses the reaction (6R)-5,10-methylene-5,6,7,8-tetrahydrofolate + glycine + H2O = (6S)-5,6,7,8-tetrahydrofolate + L-serine. It participates in one-carbon metabolism; tetrahydrofolate interconversion. It functions in the pathway amino-acid biosynthesis; glycine biosynthesis; glycine from L-serine: step 1/1. Functionally, catalyzes the reversible interconversion of serine and glycine with tetrahydrofolate (THF) serving as the one-carbon carrier. This reaction serves as the major source of one-carbon groups required for the biosynthesis of purines, thymidylate, methionine, and other important biomolecules. Also exhibits THF-independent aldolase activity toward beta-hydroxyamino acids, producing glycine and aldehydes, via a retro-aldol mechanism. The polypeptide is Serine hydroxymethyltransferase (Phytoplasma mali (strain AT)).